A 197-amino-acid polypeptide reads, in one-letter code: Transcription factor FapR (197 aa).

The protein belongs to the FapR family.

Functionally, transcriptional factor involved in regulation of membrane lipid biosynthesis by repressing genes involved in fatty acid and phospholipid metabolism. The sequence is that of Transcription factor FapR from Bacillus cereus (strain B4264).